A 2477-amino-acid polypeptide reads, in one-letter code: Spectrin alpha chain, non-erythrocytic 1 (2477 aa).

The N-terminal domain stretch occupies residues 1–14; sequence MDPSGVKVLETAED. Spectrin repeat units lie at residues 45–146, 150–251, 256–358, 361–465, 468–570, 574–676, 679–781, 785–888, 891–969, and 1096–1162; these read RFQF…VKLL, KLVQ…QGKL, EVQR…ARLN, YRLQ…QYEQ, DLQL…AQLA, HLQQ…KLRE, QQQQ…QKLA, RLQQ…DLED, QAQQ…ETGK, and LFRE…SEGL. The SH3 domain occupies 967-1026; that stretch reads TGKELVLALYDYQEKSPREVTMKKGDILTLLNSTNKDWWKVEVNDRQGFVPAAYVKKLDP. Phosphotyrosine is present on Y1176. 10 Spectrin repeats span residues 1234-1336, 1339-1442, 1446-1549, 1552-1661, 1664-1767, 1769-1873, 1876-1979, 1983-2086, 2097-2199, and 2211-2315; these read EVQR…EKLG, HDLQ…MMLD, ELQL…KLGE, TLQQ…KLKE, KQQN…KLNE, HRLH…RLEE, EYQQ…KLDE, FLQF…KLLE, LFLT…LELQ, and LRQE…NLEQ. The interval 2257 to 2477 is C-terminal domain; that stretch reads HQEIRAMRSQ…IEFTRSLFVN (221 aa). 3 EF-hand domains span residues 2328–2363, 2371–2406, and 2409–2444; these read EALK…LGYD, EPDP…RETE, and KSSE…EQAD. The Ca(2+) site is built by D2341, D2343, S2345, R2347, E2352, D2384, N2386, D2388, H2390, and E2395.

Belongs to the spectrin family. Like erythrocyte spectrin, the spectrin-like proteins are capable of forming dimers which can further associate to tetramers. Interacts with ACP1. Post-translationally, phosphorylation of Tyr-1176 decreases sensitivity to cleavage by calpain in vitro.

It is found in the cytoplasm. Its subcellular location is the cytoskeleton. It localises to the cell cortex. Its function is as follows. Morphologically, spectrin-like proteins appear to be related to spectrin, showing a flexible rod-like structure. They can bind actin but seem to differ in their calmodulin-binding activity. In nonerythroid tissues, spectrins, in association with some other proteins, may play an important role in membrane organization. This chain is Spectrin alpha chain, non-erythrocytic 1 (SPTAN1), found in Gallus gallus (Chicken).